The primary structure comprises 237 residues: Ribonuclease PH (237 aa).

Residues Arg86 and 124 to 126 (GTR) each bind phosphate.

Belongs to the RNase PH family. Homohexameric ring arranged as a trimer of dimers.

The enzyme catalyses tRNA(n+1) + phosphate = tRNA(n) + a ribonucleoside 5'-diphosphate. Phosphorolytic 3'-5' exoribonuclease that plays an important role in tRNA 3'-end maturation. Removes nucleotide residues following the 3'-CCA terminus of tRNAs; can also add nucleotides to the ends of RNA molecules by using nucleoside diphosphates as substrates, but this may not be physiologically important. Probably plays a role in initiation of 16S rRNA degradation (leading to ribosome degradation) during starvation. This is Ribonuclease PH from Methylobacterium radiotolerans (strain ATCC 27329 / DSM 1819 / JCM 2831 / NBRC 15690 / NCIMB 10815 / 0-1).